The following is a 164-amino-acid chain: Lipoprotein signal peptidase (164 aa).

3 consecutive transmembrane segments (helical) span residues 12–32 (WLWL…LILQ), 70–90 (WFFA…MYRS), and 102–122 (ALII…GFVV). Active-site residues include Asp-123 and Asp-141. Residues 137–157 (FNLADTAICVGAALIVLEGFL) traverse the membrane as a helical segment.

This sequence belongs to the peptidase A8 family.

Its subcellular location is the cell inner membrane. It catalyses the reaction Release of signal peptides from bacterial membrane prolipoproteins. Hydrolyzes -Xaa-Yaa-Zaa-|-(S,diacylglyceryl)Cys-, in which Xaa is hydrophobic (preferably Leu), and Yaa (Ala or Ser) and Zaa (Gly or Ala) have small, neutral side chains.. Its pathway is protein modification; lipoprotein biosynthesis (signal peptide cleavage). Functionally, this protein specifically catalyzes the removal of signal peptides from prolipoproteins. This is Lipoprotein signal peptidase from Escherichia coli O157:H7.